The primary structure comprises 275 residues: NH(3)-dependent NAD(+) synthetase (275 aa).

46–53 is an ATP binding site; the sequence is GISGGQDS. Position 52 (aspartate 52) interacts with Mg(2+). Arginine 140 provides a ligand contact to deamido-NAD(+). An ATP-binding site is contributed by threonine 160. Glutamate 165 lines the Mg(2+) pocket. 2 residues coordinate deamido-NAD(+): lysine 173 and aspartate 180. ATP contacts are provided by lysine 189 and threonine 211. 260 to 261 provides a ligand contact to deamido-NAD(+); that stretch reads HK.

It belongs to the NAD synthetase family. As to quaternary structure, homodimer.

The enzyme catalyses deamido-NAD(+) + NH4(+) + ATP = AMP + diphosphate + NAD(+) + H(+). It functions in the pathway cofactor biosynthesis; NAD(+) biosynthesis; NAD(+) from deamido-NAD(+) (ammonia route): step 1/1. Catalyzes the ATP-dependent amidation of deamido-NAD to form NAD. Uses ammonia as a nitrogen source. The polypeptide is NH(3)-dependent NAD(+) synthetase (Erwinia tasmaniensis (strain DSM 17950 / CFBP 7177 / CIP 109463 / NCPPB 4357 / Et1/99)).